The sequence spans 174 residues: RNA pyrophosphohydrolase (174 aa).

The region spanning 6-149 (GYRPNVGIIL…KRDVYERALS (144 aa)) is the Nudix hydrolase domain. The Nudix box motif lies at 38-59 (GGIKPGESPEAAMYRELLEEVG).

This sequence belongs to the Nudix hydrolase family. RppH subfamily. The cofactor is a divalent metal cation.

Accelerates the degradation of transcripts by removing pyrophosphate from the 5'-end of triphosphorylated RNA, leading to a more labile monophosphorylated state that can stimulate subsequent ribonuclease cleavage. In Chromobacterium violaceum (strain ATCC 12472 / DSM 30191 / JCM 1249 / CCUG 213 / NBRC 12614 / NCIMB 9131 / NCTC 9757 / MK), this protein is RNA pyrophosphohydrolase.